The primary structure comprises 148 residues: Snaclec B2 (148 aa).

The signal sequence occupies residues 1 to 24; it reads MGRLISVSFGLLVVFLSLSGTGAA. 3 disulfide bridges follow: cysteine 27-cysteine 38, cysteine 55-cysteine 144, and cysteine 121-cysteine 136. Residues 34-145 enclose the C-type lectin domain; that stretch reads YDQHCYKVFD…CRLLGHFVCK (112 aa).

It belongs to the snaclec family. Heterodimer; disulfide-linked. Expressed by the venom gland.

It localises to the secreted. Its function is as follows. Interferes with one step of hemostasis (modulation of platelet aggregation, or coagulation cascade, for example). This is Snaclec B2 from Macrovipera lebetinus (Levantine viper).